A 209-amino-acid chain; its full sequence is Thiamine-phosphate synthase (209 aa).

Residues 32–36 and aspartate 64 contribute to the 4-amino-2-methyl-5-(diphosphooxymethyl)pyrimidine site; that span reads QLRMK. Residues aspartate 65 and aspartate 84 each coordinate Mg(2+). Threonine 103 lines the 4-amino-2-methyl-5-(diphosphooxymethyl)pyrimidine pocket. Position 129 to 131 (129 to 131) interacts with 2-[(2R,5Z)-2-carboxy-4-methylthiazol-5(2H)-ylidene]ethyl phosphate; it reads TTT. Lysine 132 provides a ligand contact to 4-amino-2-methyl-5-(diphosphooxymethyl)pyrimidine. Glycine 165 is a 2-[(2R,5Z)-2-carboxy-4-methylthiazol-5(2H)-ylidene]ethyl phosphate binding site.

Belongs to the thiamine-phosphate synthase family. Mg(2+) serves as cofactor.

It catalyses the reaction 2-[(2R,5Z)-2-carboxy-4-methylthiazol-5(2H)-ylidene]ethyl phosphate + 4-amino-2-methyl-5-(diphosphooxymethyl)pyrimidine + 2 H(+) = thiamine phosphate + CO2 + diphosphate. The catalysed reaction is 2-(2-carboxy-4-methylthiazol-5-yl)ethyl phosphate + 4-amino-2-methyl-5-(diphosphooxymethyl)pyrimidine + 2 H(+) = thiamine phosphate + CO2 + diphosphate. The enzyme catalyses 4-methyl-5-(2-phosphooxyethyl)-thiazole + 4-amino-2-methyl-5-(diphosphooxymethyl)pyrimidine + H(+) = thiamine phosphate + diphosphate. Its pathway is cofactor biosynthesis; thiamine diphosphate biosynthesis; thiamine phosphate from 4-amino-2-methyl-5-diphosphomethylpyrimidine and 4-methyl-5-(2-phosphoethyl)-thiazole: step 1/1. Condenses 4-methyl-5-(beta-hydroxyethyl)thiazole monophosphate (THZ-P) and 2-methyl-4-amino-5-hydroxymethyl pyrimidine pyrophosphate (HMP-PP) to form thiamine monophosphate (TMP). This chain is Thiamine-phosphate synthase, found in Bacteroides thetaiotaomicron (strain ATCC 29148 / DSM 2079 / JCM 5827 / CCUG 10774 / NCTC 10582 / VPI-5482 / E50).